Consider the following 519-residue polypeptide: Protein nucleotidyltransferase YdiU (519 aa).

Residues Gly101, Gly103, Arg104, Lys123, Asp135, Gly136, Arg193, and Arg200 each contribute to the ATP site. The Proton acceptor role is filled by Asp271. 2 residues coordinate Mg(2+): Asn272 and Asp281. Asp281 is a binding site for ATP.

Belongs to the SELO family. It depends on Mg(2+) as a cofactor. The cofactor is Mn(2+).

The catalysed reaction is L-seryl-[protein] + ATP = 3-O-(5'-adenylyl)-L-seryl-[protein] + diphosphate. The enzyme catalyses L-threonyl-[protein] + ATP = 3-O-(5'-adenylyl)-L-threonyl-[protein] + diphosphate. It carries out the reaction L-tyrosyl-[protein] + ATP = O-(5'-adenylyl)-L-tyrosyl-[protein] + diphosphate. It catalyses the reaction L-histidyl-[protein] + UTP = N(tele)-(5'-uridylyl)-L-histidyl-[protein] + diphosphate. The catalysed reaction is L-seryl-[protein] + UTP = O-(5'-uridylyl)-L-seryl-[protein] + diphosphate. The enzyme catalyses L-tyrosyl-[protein] + UTP = O-(5'-uridylyl)-L-tyrosyl-[protein] + diphosphate. Its function is as follows. Nucleotidyltransferase involved in the post-translational modification of proteins. It can catalyze the addition of adenosine monophosphate (AMP) or uridine monophosphate (UMP) to a protein, resulting in modifications known as AMPylation and UMPylation. The sequence is that of Protein nucleotidyltransferase YdiU from Tolumonas auensis (strain DSM 9187 / NBRC 110442 / TA 4).